We begin with the raw amino-acid sequence, 201 residues long: MARYTGPVTRKSRRLRTDLVGGDQAFEKRPYPPGQHGRARIKESEYLLQLQEKQKARFTYGVMEKQFRRYYEEAVRQPGKTGEELLRILESRLDNVVYRAGLARTRRMARQLVTHGHFTVNGVRVDVPSYRVSQYDIIDVREQSLNSVPFQIARETAGDRPVPSWLQVVGERQRILIHQLPERAQIDVPLTEQLIVEFYSK.

Residues 91–157 form the S4 RNA-binding domain; that stretch reads SRLDNVVYRA…VPFQIARETA (67 aa).

The protein belongs to the universal ribosomal protein uS4 family. As to quaternary structure, part of the 30S ribosomal subunit. Contacts protein S5. The interaction surface between S4 and S5 is involved in control of translational fidelity.

In terms of biological role, one of the primary rRNA binding proteins, it binds directly to 16S rRNA where it nucleates assembly of the body of the 30S subunit. Its function is as follows. With S5 and S12 plays an important role in translational accuracy. The sequence is that of Small ribosomal subunit protein uS4 from Mycolicibacterium paratuberculosis (strain ATCC BAA-968 / K-10) (Mycobacterium paratuberculosis).